The following is a 51-amino-acid chain: Large ribosomal subunit protein eL39 (51 aa).

Positions 32–51 (KGSVKQHPKMRHWRRNTLKK) are disordered. Residues 33–51 (GSVKQHPKMRHWRRNTLKK) are compositionally biased toward basic residues.

Belongs to the eukaryotic ribosomal protein eL39 family.

This is Large ribosomal subunit protein eL39 from Methanococcus vannielii (strain ATCC 35089 / DSM 1224 / JCM 13029 / OCM 148 / SB).